The sequence spans 299 residues: uncharacterized protein (299 aa).

The disordered stretch occupies residues 1–44 (MSDSNLTNPIKAFFHDEFPEQYQEPPGLQKNMKPVPDCGEKSYK). 55 to 79 (LVTGGDSGIGRAAAIAYAREGADVA) is a binding site for NADP(+). Ser-188 contacts substrate. Tyr-201 acts as the Proton acceptor in catalysis.

It belongs to the short-chain dehydrogenases/reductases (SDR) family.

This is an uncharacterized protein from Bacillus subtilis (strain 168).